The chain runs to 231 residues: UPF0653 protein C607.02c (231 aa).

Disordered stretches follow at residues methionine 1–asparagine 33, tyrosine 47–tyrosine 68, serine 93–glutamate 132, and isoleucine 147–glutamate 178. Residues serine 9–aspartate 27 show a composition bias toward basic and acidic residues. Composition is skewed to basic residues over residues lysine 53–aspartate 67 and glutamate 109–lysine 119.

It belongs to the UPF0653 family.

Its subcellular location is the nucleus. The protein resides in the nucleolus. The sequence is that of UPF0653 protein C607.02c from Schizosaccharomyces pombe (strain 972 / ATCC 24843) (Fission yeast).